The chain runs to 337 residues: Adenosine deaminase-like protein (337 aa).

Zn(2+) is bound by residues histidine 14 and histidine 16. N(6)-methyl-AMP is bound by residues histidine 16, asparagine 18, histidine 66, 98–101, and glycine 171; that span reads TTPK. Histidine 198 is a binding site for Zn(2+). N(6)-methyl-AMP is bound by residues glutamate 201, aspartate 276, and aspartate 277. Residue glutamate 201 is the Proton donor of the active site. Aspartate 276 is a binding site for Zn(2+).

This sequence belongs to the metallo-dependent hydrolases superfamily. Adenosine and AMP deaminases family. As to quaternary structure, monomer. The cofactor is Zn(2+).

The enzyme catalyses N(6)-methyl-AMP + H2O + H(+) = IMP + methylamine. Functionally, catalyzes the hydrolysis of the free cytosolic methylated adenosine nucleotide N(6)-methyl-AMP (N6-mAMP) to produce inositol monophosphate (IMP) and methylamine. Is required for the catabolism of cytosolic N6-mAMP, which is derived from the degradation of mRNA containing N6-methylated adenine (m6A). In Drosophila melanogaster (Fruit fly), this protein is Adenosine deaminase-like protein (Ada).